We begin with the raw amino-acid sequence, 92 residues long: Small ribosomal subunit protein uS19 (92 aa).

A disordered region spans residues 73–92 (EFSPTRSFRGHAGAKNKGRK). Basic residues predominate over residues 80-92 (FRGHAGAKNKGRK).

Belongs to the universal ribosomal protein uS19 family.

In terms of biological role, protein S19 forms a complex with S13 that binds strongly to the 16S ribosomal RNA. This Christiangramia forsetii (strain DSM 17595 / CGMCC 1.15422 / KT0803) (Gramella forsetii) protein is Small ribosomal subunit protein uS19.